The sequence spans 256 residues: 5-oxoprolinase subunit A (256 aa).

It belongs to the LamB/PxpA family. Forms a complex composed of PxpA, PxpB and PxpC.

The catalysed reaction is 5-oxo-L-proline + ATP + 2 H2O = L-glutamate + ADP + phosphate + H(+). Functionally, catalyzes the cleavage of 5-oxoproline to form L-glutamate coupled to the hydrolysis of ATP to ADP and inorganic phosphate. This Geobacillus kaustophilus (strain HTA426) protein is 5-oxoprolinase subunit A.